A 30-amino-acid polypeptide reads, in one-letter code: Truncated interleukin-1-binding protein (30 aa).

Residues 1-18 (MSILPVIFLPIFFYSSFV) form the signal peptide.

The protein belongs to the interleukin-1 receptor family.

The chain is Truncated interleukin-1-binding protein from Vaccinia virus (strain Copenhagen) (VACV).